The sequence spans 152 residues: Transcriptional regulator MraZ (152 aa).

SpoVT-AbrB domains are found at residues 5–52 (INAI…TAAQ) and 81–124 (ATDV…NKEL).

It belongs to the MraZ family. In terms of assembly, forms oligomers.

Its subcellular location is the cytoplasm. It is found in the nucleoid. In Legionella pneumophila (strain Paris), this protein is Transcriptional regulator MraZ.